We begin with the raw amino-acid sequence, 308 residues long: Ribonuclease Z (308 aa).

His61, His63, Asp65, His66, His139, Asp210, and His268 together coordinate Zn(2+). Asp65 acts as the Proton acceptor in catalysis.

Belongs to the RNase Z family. Homodimer. It depends on Zn(2+) as a cofactor.

The enzyme catalyses Endonucleolytic cleavage of RNA, removing extra 3' nucleotides from tRNA precursor, generating 3' termini of tRNAs. A 3'-hydroxy group is left at the tRNA terminus and a 5'-phosphoryl group is left at the trailer molecule.. Functionally, zinc phosphodiesterase, which displays some tRNA 3'-processing endonuclease activity. Probably involved in tRNA maturation, by removing a 3'-trailer from precursor tRNA. The sequence is that of Ribonuclease Z from Natronomonas pharaonis (strain ATCC 35678 / DSM 2160 / CIP 103997 / JCM 8858 / NBRC 14720 / NCIMB 2260 / Gabara) (Halobacterium pharaonis).